The following is a 90-amino-acid chain: Putative defensin-like protein 64 (90 aa).

The signal sequence occupies residues 1–23 (MWGRQIVLKIFFLVLSCVIVIET). 2 cysteine pairs are disulfide-bonded: Cys33-Cys56 and Cys42-Cys77.

The protein belongs to the DEFL family.

It is found in the secreted. The chain is Putative defensin-like protein 64 from Arabidopsis thaliana (Mouse-ear cress).